Reading from the N-terminus, the 435-residue chain is 5-methylthioadenosine/S-adenosylhomocysteine deaminase (435 aa).

2 residues coordinate Zn(2+): H65 and H67. E94, R150, and H189 together coordinate substrate. Residue H216 coordinates Zn(2+). E219 and D304 together coordinate substrate. A Zn(2+)-binding site is contributed by D304.

This sequence belongs to the metallo-dependent hydrolases superfamily. MTA/SAH deaminase family. The cofactor is Zn(2+).

The enzyme catalyses S-adenosyl-L-homocysteine + H2O + H(+) = S-inosyl-L-homocysteine + NH4(+). It catalyses the reaction S-methyl-5'-thioadenosine + H2O + H(+) = S-methyl-5'-thioinosine + NH4(+). Functionally, catalyzes the deamination of 5-methylthioadenosine and S-adenosyl-L-homocysteine into 5-methylthioinosine and S-inosyl-L-homocysteine, respectively. Is also able to deaminate adenosine. The polypeptide is 5-methylthioadenosine/S-adenosylhomocysteine deaminase (Bacillus anthracis (strain A0248)).